The following is a 349-amino-acid chain: tRNA pseudouridine synthase D (349 aa).

Residues Met-1–Pro-22 are disordered. The Nucleophile role is filled by Asp-78. The TRUD domain occupies Gly-150–Leu-304.

This sequence belongs to the pseudouridine synthase TruD family.

It carries out the reaction uridine(13) in tRNA = pseudouridine(13) in tRNA. In terms of biological role, responsible for synthesis of pseudouridine from uracil-13 in transfer RNAs. The chain is tRNA pseudouridine synthase D from Anaeromyxobacter sp. (strain Fw109-5).